The following is a 372-amino-acid chain: Ligninase LG6 (372 aa).

Positions 1–21 are cleaved as a signal peptide; it reads MALKQLAAAVALALSIQAAQG. A propeptide spanning residues 22–28 is cleaved from the precursor; the sequence is AAVKEKR. Cystine bridges form between Cys31/Cys43 and Cys62/Cys148. The active-site Proton acceptor is His75. Positions 76, 94, 96, and 98 each coordinate Ca(2+). His204 contacts heme b. Ser205, Asp222, Thr224, Val227, and Asp229 together coordinate Ca(2+). A disulfide bridge links Cys277 with Cys345. An N-linked (GlcNAc...) asparagine glycan is attached at Asn285. Low complexity predominate over residues 352–361; that stretch reads TLTTLPGPET. The tract at residues 352-372 is disordered; that stretch reads TLTTLPGPETSVQRIQPPPGA.

This sequence belongs to the peroxidase family. Ligninase subfamily. Heme b is required as a cofactor. Ca(2+) serves as cofactor.

It carries out the reaction 1-(3,4-dimethoxyphenyl)-2-(2-methoxyphenoxy)propane-1,3-diol + H2O2 = 3,4-dimethoxybenzaldehyde + guaiacol + glycolaldehyde + H2O. The catalysed reaction is 2 (3,4-dimethoxyphenyl)methanol + H2O2 = 2 (3,4-dimethoxyphenyl)methanol radical + 2 H2O. Its pathway is secondary metabolite metabolism; lignin degradation. Its function is as follows. Depolymerization of lignin. Catalyzes the C(alpha)-C(beta) cleavage of the propyl side chains of lignin. This is Ligninase LG6 (GLG6) from Phanerodontia chrysosporium (White-rot fungus).